The sequence spans 305 residues: Aspartate carbamoyltransferase catalytic subunit (305 aa).

Positions 51 and 52 each coordinate carbamoyl phosphate. Lysine 79 serves as a coordination point for L-aspartate. Carbamoyl phosphate is bound by residues arginine 101, histidine 129, and glutamine 132. Residues arginine 165 and arginine 220 each contribute to the L-aspartate site. The carbamoyl phosphate site is built by glycine 258 and proline 259.

This sequence belongs to the aspartate/ornithine carbamoyltransferase superfamily. ATCase family. Heterododecamer (2C3:3R2) of six catalytic PyrB chains organized as two trimers (C3), and six regulatory PyrI chains organized as three dimers (R2).

The enzyme catalyses carbamoyl phosphate + L-aspartate = N-carbamoyl-L-aspartate + phosphate + H(+). It participates in pyrimidine metabolism; UMP biosynthesis via de novo pathway; (S)-dihydroorotate from bicarbonate: step 2/3. Functionally, catalyzes the condensation of carbamoyl phosphate and aspartate to form carbamoyl aspartate and inorganic phosphate, the committed step in the de novo pyrimidine nucleotide biosynthesis pathway. This chain is Aspartate carbamoyltransferase catalytic subunit, found in Rubrobacter xylanophilus (strain DSM 9941 / JCM 11954 / NBRC 16129 / PRD-1).